Consider the following 474-residue polypeptide: Ankyrin repeat, SAM and basic leucine zipper domain-containing protein 1 (474 aa).

The disordered stretch occupies residues 1–31 (MAGRLRGPAVPGGGESSDSDEDGWDIGYTER). A phosphoserine mark is found at S16, S17, and S19. ANK repeat units follow at residues 43–72 (EKDE…QVDS), 76–105 (FGWT…NASF), 108–142 (DQHT…SPNA), 146–175 (KRMS…EINA), 179–208 (NGYT…DKTL), and 212–241 (DGKT…PLHG). Residues 270-333 (SYSAFGDLEI…KIMDAVEELQ (64 aa)) enclose the SAM domain.

As to quaternary structure, interacts with DDX4, PIWIL1, RANBP9 and TDRD1.

The protein resides in the cytoplasm. Functionally, plays a central role during spermatogenesis by repressing transposable elements and preventing their mobilization, which is essential for the germline integrity. Acts via the piRNA metabolic process, which mediates the repression of transposable elements during meiosis by forming complexes composed of piRNAs and Piwi proteins and governs the methylation and subsequent repression of transposons. Its association with pi-bodies suggests a participation in the primary piRNAs metabolic process. Required prior to the pachytene stage to facilitate the production of multiple types of piRNAs, including those associated with repeats involved in the regulation of retrotransposons. May act by mediating protein-protein interactions during germ cell maturation. The polypeptide is Ankyrin repeat, SAM and basic leucine zipper domain-containing protein 1 (ASZ1) (Ornithorhynchus anatinus (Duckbill platypus)).